The sequence spans 123 residues: MPTINQLLRKKRIKPVARNKVPALQKQPLKRGVCVKVYTTTPKKPNSALRKVARVRLSNGFEVTAYIGGEGHNLQEHSVVLIRGGRVKDLPGVRYHILRGNLDTQGVANRKKRRSLYGTKKGK.

Asp-89 carries the post-translational modification 3-methylthioaspartic acid.

This sequence belongs to the universal ribosomal protein uS12 family. Part of the 30S ribosomal subunit. Contacts proteins S8 and S17. May interact with IF1 in the 30S initiation complex.

Its function is as follows. With S4 and S5 plays an important role in translational accuracy. Functionally, interacts with and stabilizes bases of the 16S rRNA that are involved in tRNA selection in the A site and with the mRNA backbone. Located at the interface of the 30S and 50S subunits, it traverses the body of the 30S subunit contacting proteins on the other side and probably holding the rRNA structure together. The combined cluster of proteins S8, S12 and S17 appears to hold together the shoulder and platform of the 30S subunit. In Pelagibacter ubique (strain HTCC1062), this protein is Small ribosomal subunit protein uS12.